Consider the following 370-residue polypeptide: Actin-related protein 2/3 complex subunit 1A-A (370 aa).

WD repeat units lie at residues 6–45, 50–89, 140–179, 202–241, 244–284, and 322–365; these read FLLE…WVKG, EHNG…WKPT, PIRS…VDEK, SSGG…SVSQ, TEFL…TFVS, and LHQN…SYIQ.

The protein belongs to the WD repeat ARPC1 family. As to quaternary structure, component of the Arp2/3 complex.

Its subcellular location is the cytoplasm. The protein resides in the cytoskeleton. It localises to the nucleus. Functionally, probably functions as a component of the Arp2/3 complex which is involved in regulation of actin polymerization and together with an activating nucleation-promoting factor (NPF) mediates the formation of branched actin networks. In addition to its role in the cytoplasmic cytoskeleton, the Arp2/3 complex also promotes actin polymerization in the nucleus, thereby regulating gene transcription and repair of damaged DNA. This chain is Actin-related protein 2/3 complex subunit 1A-A (arpc1a-a), found in Xenopus laevis (African clawed frog).